The following is a 174-amino-acid chain: MIITIGGLPGTGTTTISKLLSEKYGLSHVCAGFIFRDMAKENNMTLQEFSNYAEKNSGVDNEIDRRQVEAAKSGNLILEGRLAGWILKKNDMVPDLSIWLKADPMVRCKRISEREHENVDLALEKMLLREASEKKRYKEIYNIEIDDLSIYDLVIESSKWGATGVFNIIEKAIK.

Residue 7-15 participates in ATP binding; it reads GLPGTGTTT.

Belongs to the cytidylate kinase family. Type 2 subfamily.

The protein resides in the cytoplasm. It carries out the reaction CMP + ATP = CDP + ADP. The enzyme catalyses dCMP + ATP = dCDP + ADP. The protein is Cytidylate kinase of Methanococcus vannielii (strain ATCC 35089 / DSM 1224 / JCM 13029 / OCM 148 / SB).